We begin with the raw amino-acid sequence, 884 residues long: MADSSESFNIATSPRTGSRRDALTSSPGRDLPPFEDESEGMFGDEVPREEEEDGEELIGDAMERDYRAISELDRYEAEGLDDEDDVEDLTASQRDAAEQAMRMRDREMGHELGRMRRGLLYDSDEEDEDRPARKRRMAERAAEGAPEEDEEMIESIENLEDMKGHTVREWVSMAATRLEIYHRFKNFLRTHVDEHGHNVFKEKISDMCKENKESLVVNYEDLAAREHVLAYFLPEAPAEMLKIFDEAAKEVVLVMYPKYDRIAREIHVRISHLPLVEELRSLRQLHLNQLIRTSGVVTCCTGVLPQLSMVKYNCNKCNFILGPFFQSQNQEVKPGSCPECQSLGPFEINMEETVYQNYQRITIQESPGKVAAGRLPRSKDAILLADLVDSCKPGDEIELTGTYHNNYDGSLNTANGFPVFATVILANHITKKDDKVAVGELTDEDVKAIVALSKDERIGERIFASIAPSIYGHEDIKRGLALALFGGEAKNPGGKHKVRGDINVLLCGDPGTAKSQFLKYVEKVASRAVFTTGQGASAVGLTAYVQRHPVTKEWTLEAGALVLADRGVCLIDEFDKMNDQDRTSIHEAMEQQSISISKAGIVTSLQARCTIIAASNPIGGRYDPSLTFSENVDLTEPIVSRFDILCVVRDTVDPVQDEMLARFVVGSHIKHHPSSKDIANGEEFALPNTFGVEPLPQEVLKKYIMYSKEKIHPKLNQMDQDKVAKMYSDLRKESMATGSIPITVRHIESMIRMAEAHARMHLRDYVVEDDVNMAIRVMLESFIDTQKFSVMRSMRKTFARYLAFRRDNNELLLFVLKQLVAEQTSYQRNRYGAQQDTIEVPEKDLVDKARQINIHNLSAFYDSDLFKMNRFTHDVKKKMIIQQF.

Polar residues predominate over residues 1-16 (MADSSESFNIATSPRT). Disordered stretches follow at residues 1–61 (MADS…IGDA) and 120–151 (LYDS…EDEE). A compositionally biased stretch (acidic residues) spans 47-58 (PREEEEDGEELI). The segment at 314-340 (CNKCNFILGPFFQSQNQEVKPGSCPEC) adopts a C4-type zinc-finger fold. The MCM domain maps to 458 to 664 (IGERIFASIA…VQDEMLARFV (207 aa)). Positions 515 and 516 each coordinate ADP. The short motif at 640–643 (SRFD) is the Arginine finger element.

This sequence belongs to the MCM family. Component of the mcm2-7 complex (RLF-M). The complex forms a toroidal hexameric ring with the proposed subunit order mcm2-mcm6-mcm4-mcm7-mcm3-mcm5. Component of the replisome complex. Component of the CMG helicase complex, composed of the mcm2-7 complex, the GINS complex and cdc45. Post-translationally, may be in a phosphorylated state in the mitotic mcm complex. Phosphorylated in the interphase mcm complex. Phosphorylated by the cdc7-dbf4 and cdc7-dbf4b complexes.

It is found in the nucleus. The protein localises to the chromosome. It catalyses the reaction ATP + H2O = ADP + phosphate + H(+). Acts as a component of the MCM2-7 complex (MCM complex) which is the replicative helicase essential for 'once per cell cycle' DNA replication initiation and elongation in eukaryotic cells. Core component of CDC45-MCM-GINS (CMG) helicase, the molecular machine that unwinds template DNA during replication, and around which the replisome is built. The active ATPase sites in the MCM2-7 ring are formed through the interaction surfaces of two neighboring subunits such that a critical structure of a conserved arginine finger motif is provided in trans relative to the ATP-binding site of the Walker A box of the adjacent subunit. The six ATPase active sites, however, are likely to contribute differentially to the complex helicase activity. Required for the entry in S phase and for cell division. This Xenopus tropicalis (Western clawed frog) protein is DNA replication licensing factor mcm2.